Reading from the N-terminus, the 503-residue chain is MKLFILIILSICLALVNSQQGVYPDSGVYVSLNSNFLATFGNEFTQTIQNQINSYPVANVDGKTGKVSYSVTNIQQSVQLGDFFFQQTGVNTYNIGWNSVTFTITTDYQGCYKIGGLKKLSICEKGDIKINSQATLSLSIAMTIDFTQSTPTISCSSTTLNVPANGINYNVHCSSKVCDKTHDITNEIASKFVPSVESGMTTEINNNVGKYLSLFPSLRDMNMEYNGNEFYLDSRGTIVESSQGGVLTPTMVLAMNGGIVVKNSAGQFIYPTQSPSSLPSEEAVEDFQTDIAVTLTPYLFESLVDAMFESALPMTITPSEVPSESPVHLNTSDPFFNQTAPGLTGKYPNSPIDVEIISPSSSSQTMVSINSTGVLVGLHSIPVNFIVNDETVFQILFNFNIELTPALSQSSNGISVTGTLDKLDALVTVGSTSVGDIDVSGFVQLIELAQGLVKIPTITIQNPLTTYSLSDLSLSIGDQYIQILGNLQQQQQQQQKQKQILIK.

Positions 1–18 (MKLFILIILSICLALVNS) are cleaved as a signal peptide. N-linked (GlcNAc...) asparagine glycosylation is found at Asn-330, Asn-337, and Asn-370.

This sequence belongs to the UPF0522 family.

It localises to the secreted. This chain is UPF0522 protein C, found in Dictyostelium discoideum (Social amoeba).